The following is a 214-amino-acid chain: Probable transaldolase (214 aa).

Catalysis depends on Lys83, which acts as the Schiff-base intermediate with substrate.

Belongs to the transaldolase family. Type 3B subfamily.

Its subcellular location is the cytoplasm. It carries out the reaction D-sedoheptulose 7-phosphate + D-glyceraldehyde 3-phosphate = D-erythrose 4-phosphate + beta-D-fructose 6-phosphate. It participates in carbohydrate degradation; pentose phosphate pathway; D-glyceraldehyde 3-phosphate and beta-D-fructose 6-phosphate from D-ribose 5-phosphate and D-xylulose 5-phosphate (non-oxidative stage): step 2/3. In terms of biological role, transaldolase is important for the balance of metabolites in the pentose-phosphate pathway. The sequence is that of Probable transaldolase from Carboxydothermus hydrogenoformans (strain ATCC BAA-161 / DSM 6008 / Z-2901).